Reading from the N-terminus, the 417-residue chain is MSLSKKLTLDKLDVRGKRVIMRVDFNVPMKKNQITNNQRIKASIPSIKYCLDNGAKAVVLMSHLGRPDGVPMPDKYSLQPVAAELKSLLGKDVLFLKDCVGAEVENACANPAPGSVILLENLRFHVEEEGKGQDPSGKKIKAEPDKIEGFRASLSKLGDVYVNDAFGTAHRAHSSMVGVNLPHKASGFLMKKELDYFAKALENPVRPFLAILGGAKVADKIQLIKNMLDKVNEMIIGGGMAYTFLKVLNNMEIGASLFDEEGAKIVKDIMTKAQKNGVRITFPVDFVTADKFDENAQVGKATVASGIPPGWMGLDCGPESNKNHAQVVAQARLIVWNGPLGVFEWDAFAKGTKALMDEIVKATSKGCITIIGGGDTATCCAKWNTEDKVSHVSTGGGASLELLEGKILPGVEALSNM.

Residue serine 2 is modified to N-acetylserine. A phosphoserine mark is found at serine 2 and serine 4. At lysine 11 the chain carries N6-acetyllysine. Valine 23, aspartate 24, phenylalanine 25, asparagine 26, glutamine 38, and arginine 39 together coordinate (2R)-3-phosphoglycerate. Lysine 48 carries the N6-acetyllysine modification. Residues serine 62, histidine 63, glycine 65, and arginine 66 each coordinate (2R)-3-phosphoglycerate. N6-acetyllysine is present on residues lysine 75, lysine 86, and lysine 97. Positions 122 and 123 each coordinate (2R)-3-phosphoglycerate. Residues lysine 131 and lysine 146 each carry the N6-acetyllysine modification. The (2R)-3-phosphoglycerate site is built by histidine 170 and arginine 171. Residue tyrosine 196 is modified to Phosphotyrosine. An N6-acetyllysine modification is found at lysine 199. Glycine 214 serves as a coordination point for ADP. Position 214 (glycine 214) interacts with CDP. 2 residues coordinate AMP: alanine 215 and lysine 216. Alanine 215 contributes to the ATP binding site. A Mg(2+)-binding site is contributed by alanine 215. Mg(2+) is bound by residues alanine 218 and aspartate 219. CDP is bound at residue aspartate 219. Lysine 220 contacts AMP. Lysine 220 contributes to the ATP binding site. Glycine 238 lines the ADP pocket. A CDP-binding site is contributed by glycine 238. Glycine 239 lines the AMP pocket. Residue glycine 239 participates in ATP binding. N6-acetyllysine occurs at positions 267 and 291. AMP is bound at residue glycine 313. Glycine 313 contributes to the ATP binding site. 2 residues coordinate CDP: glycine 338 and phenylalanine 343. Phenylalanine 343 contacts ADP. Glutamate 344 is a binding site for AMP. ATP is bound by residues glutamate 344, aspartate 375, and threonine 376. Aspartate 375 lines the Mg(2+) pocket.

This sequence belongs to the phosphoglycerate kinase family. Monomer. Mg(2+) serves as cofactor.

Its subcellular location is the cytoplasm. It catalyses the reaction (2R)-3-phosphoglycerate + ATP = (2R)-3-phospho-glyceroyl phosphate + ADP. The protein operates within carbohydrate degradation; glycolysis; pyruvate from D-glyceraldehyde 3-phosphate: step 2/5. In terms of biological role, essential for sperm motility and male fertility but is not required for the completion of spermatogenesis. This chain is Phosphoglycerate kinase 2 (PGK2), found in Macaca fascicularis (Crab-eating macaque).